The primary structure comprises 301 residues: B3 domain-containing protein At5g18090 (301 aa).

The segment at residues 18-113 is a DNA-binding region (TF-B3 1); that stretch reads FFKILRSADL…CFTVDIYQID (96 aa). Disordered stretches follow at residues 123-142 and 153-194; these read SATIASSSGRNKREQRNNIY and SWSE…KMKV. Residues 133–142 show a composition bias toward basic and acidic residues; that stretch reads NKREQRNNIY. Residues 209–301 constitute a DNA-binding region (TF-B3 2); sequence VPEFTLTIKK…PTEMLVRVSK (93 aa).

The protein localises to the nucleus. This chain is B3 domain-containing protein At5g18090, found in Arabidopsis thaliana (Mouse-ear cress).